Consider the following 151-residue polypeptide: SsrA-binding protein (151 aa).

Residues 131 to 151 (KRESIKEKDWKRDQSRLIRQK) are disordered.

It belongs to the SmpB family.

The protein resides in the cytoplasm. Functionally, required for rescue of stalled ribosomes mediated by trans-translation. Binds to transfer-messenger RNA (tmRNA), required for stable association of tmRNA with ribosomes. tmRNA and SmpB together mimic tRNA shape, replacing the anticodon stem-loop with SmpB. tmRNA is encoded by the ssrA gene; the 2 termini fold to resemble tRNA(Ala) and it encodes a 'tag peptide', a short internal open reading frame. During trans-translation Ala-aminoacylated tmRNA acts like a tRNA, entering the A-site of stalled ribosomes, displacing the stalled mRNA. The ribosome then switches to translate the ORF on the tmRNA; the nascent peptide is terminated with the 'tag peptide' encoded by the tmRNA and targeted for degradation. The ribosome is freed to recommence translation, which seems to be the essential function of trans-translation. This chain is SsrA-binding protein, found in Rickettsia bellii (strain OSU 85-389).